The sequence spans 511 residues: S-layer protein B (511 aa).

Positions 1-24 are cleaved as a signal peptide; sequence MVKYMNLIVLGMLMFGVFVTLSLG. The stretch at 358–392 forms a coiled coil; that stretch reads IQRLQSEVSVLESEVDQLKVEIQSLNETLTLQASE. The chain crosses the membrane as a helical span at residues 487 to 507; sequence GGIILGVIALIIAIVAVVLVF.

It belongs to the Sulfolobales SlaB family. As to quaternary structure, the mushroom-shaped unit cells of the Sulfolobales' S-layers may consist of three SlaB subunits and six SlaA subunits.

Its subcellular location is the secreted. It localises to the cell wall. It is found in the S-layer. The protein resides in the cell membrane. Functionally, S-layer small protein. May anchor the complex to the cell membrane. The sequence is that of S-layer protein B from Acidianus ambivalens (Desulfurolobus ambivalens).